Consider the following 217-residue polypeptide: Cytidylate kinase (217 aa).

10–18 (GPAGAGKST) contacts ATP.

The protein belongs to the cytidylate kinase family. Type 1 subfamily.

The protein localises to the cytoplasm. The catalysed reaction is CMP + ATP = CDP + ADP. It carries out the reaction dCMP + ATP = dCDP + ADP. The polypeptide is Cytidylate kinase (Clostridium botulinum (strain Loch Maree / Type A3)).